Here is a 195-residue protein sequence, read N- to C-terminus: Myelin basic protein (195 aa).

Ala-2 carries the N-acetylalanine modification. Residues Ser-8 and Ser-13 each carry the phosphoserine modification. Residue Tyr-15 is modified to Phosphotyrosine. Residue Thr-18 is modified to Phosphothreonine. A Phosphoserine modification is found at Ser-20. Thr-21 bears the Phosphothreonine mark. Residues Arg-26 and Arg-32 each carry the citrulline modification. A Phosphothreonine modification is found at Thr-36. Ser-41 bears the Phosphoserine mark. Residues Arg-44 and Arg-50 each carry the omega-N-methylarginine modification. Positions 45-79 (FFSGDRGAPKRGSGKVPWLKQSRSPLPSHARSRPG) are disordered. Ser-57 carries the post-translational modification Phosphoserine. Thr-92 is modified (phosphothreonine). Tyr-94 bears the Phosphotyrosine mark. Ser-101 is subject to Phosphoserine. Phosphothreonine is present on residues Thr-104, Thr-119, and Thr-122. The interval 117-139 (IVTPRTPPPSQGKGRGLSLSRFS) is disordered. Residue Gln-127 is modified to Deamidated glutamine. Residue Arg-131 is modified to Omega-N-methylarginine; alternate. Arg-131 bears the Symmetric dimethylarginine; alternate mark. Ser-139 bears the Phosphoserine mark. Position 146 is an N6-acetyllysine (Lys-146). Residue Arg-154 is modified to Citrulline. Gln-172 carries the post-translational modification Deamidated glutamine. Arg-184 carries the citrulline modification. Ser-186 is subject to Phosphoserine. The residue at position 190 (Ser-190) is a Phosphoserine; by UHMK1. At Arg-195 the chain carries Citrulline.

The protein belongs to the myelin basic protein family. Homodimer. As in other animals, several charge isomers may be produced as a result of optional post-translational modifications, such as phosphorylation of serine or threonine residues, deamidation of glutamine or asparagine residues, citrullination and methylation of arginine residues. Post-translationally, arg-131 was found to be 44% monomethylated and 11% symmetrically dimethylated. In terms of processing, phosphorylated by TAOK2, VRK2, MAPK11, MAPK12, MAPK14 and MINK1. Proteolytically cleaved in B cell lysosomes by cathepsin CTSG which degrades the major immunogenic MBP epitope and prevents the activation of MBP-specific autoreactive T cells. In terms of tissue distribution, found in both the central and the peripheral nervous system.

Its subcellular location is the myelin membrane. Its function is as follows. Is, with PLP, the most abundant protein component of the myelin membrane in the CNS. Has a role in both the formation and stabilization of this compact multilayer arrangement of bilayers. Each splice variant and charge isomer may have a specialized function in the assembly of an optimized, biochemically functional myelin membrane. The chain is Myelin basic protein (Mbp) from Rattus norvegicus (Rat).